A 214-amino-acid chain; its full sequence is Phosphatidylserine decarboxylase proenzyme (214 aa).

S183 (schiff-base intermediate with substrate; via pyruvic acid) is an active-site residue. A Pyruvic acid (Ser); by autocatalysis modification is found at S183.

Belongs to the phosphatidylserine decarboxylase family. PSD-A subfamily. In terms of assembly, heterodimer of a large membrane-associated beta subunit and a small pyruvoyl-containing alpha subunit. Pyruvate serves as cofactor. Is synthesized initially as an inactive proenzyme. Formation of the active enzyme involves a self-maturation process in which the active site pyruvoyl group is generated from an internal serine residue via an autocatalytic post-translational modification. Two non-identical subunits are generated from the proenzyme in this reaction, and the pyruvate is formed at the N-terminus of the alpha chain, which is derived from the carboxyl end of the proenzyme. The post-translation cleavage follows an unusual pathway, termed non-hydrolytic serinolysis, in which the side chain hydroxyl group of the serine supplies its oxygen atom to form the C-terminus of the beta chain, while the remainder of the serine residue undergoes an oxidative deamination to produce ammonia and the pyruvoyl prosthetic group on the alpha chain.

It localises to the cell membrane. It catalyses the reaction a 1,2-diacyl-sn-glycero-3-phospho-L-serine + H(+) = a 1,2-diacyl-sn-glycero-3-phosphoethanolamine + CO2. It functions in the pathway phospholipid metabolism; phosphatidylethanolamine biosynthesis; phosphatidylethanolamine from CDP-diacylglycerol: step 2/2. In terms of biological role, catalyzes the formation of phosphatidylethanolamine (PtdEtn) from phosphatidylserine (PtdSer). The protein is Phosphatidylserine decarboxylase proenzyme of Chlorobaculum parvum (strain DSM 263 / NCIMB 8327) (Chlorobium vibrioforme subsp. thiosulfatophilum).